A 142-amino-acid polypeptide reads, in one-letter code: Large ribosomal subunit protein uL22c (142 aa).

Belongs to the universal ribosomal protein uL22 family. Part of the 50S ribosomal subunit.

The protein localises to the plastid. Its subcellular location is the chloroplast. Functionally, this protein binds specifically to 23S rRNA. The globular domain of the protein is located near the polypeptide exit tunnel on the outside of the subunit, while an extended beta-hairpin is found that lines the wall of the exit tunnel in the center of the 70S ribosome. This is Large ribosomal subunit protein uL22c (rpl22) from Picea abies (Norway spruce).